Here is a 114-residue protein sequence, read N- to C-terminus: Tyrosine-protein phosphatase 27 (114 aa).

The 114-residue stretch at 1 to 114 (WQMIVEHKCC…ELGNDNPIVV (114 aa)) folds into the Tyrosine-protein phosphatase domain. Asp-82 serves as a coordination point for substrate.

The protein belongs to the protein-tyrosine phosphatase family.

It catalyses the reaction O-phospho-L-tyrosyl-[protein] + H2O = L-tyrosyl-[protein] + phosphate. This is Tyrosine-protein phosphatase 27 (STY-27) from Styela plicata (Wrinkled sea squirt).